Consider the following 1012-residue polypeptide: Formate dehydrogenase subunit alpha (1012 aa).

The tat-type signal signal peptide spans 1–35 (MLIKRRAFLKLTAAGATLSAFGGLGVDLAPAKAQA). The 4Fe-4S Mo/W bis-MGD-type domain occupies 45-103 (AKQTTSVCCYCSVGCGLIVHTDKKTNRAINVEGDPDHPINEGSLCAKGASTWQLAENER). [4Fe-4S] cluster contacts are provided by Cys52, Cys55, Cys59, and Cys89. Sec193 lines the W-bis(molybdopterin guanine dinucleotide) pocket. A non-standard amino acid (selenocysteine) is located at residue Sec193. Ca(2+)-binding residues include Thr393, Lys395, Lys398, Leu428, and Asn430. The cysteines at positions 852 and 879 are disulfide-linked.

It belongs to the prokaryotic molybdopterin-containing oxidoreductase family. Heterodimer of alpha (FdhA) and beta (FdhB) subunits. The cofactor is [4Fe-4S] cluster. W-bis(molybdopterin guanine dinucleotide) is required as a cofactor. The disulfide bond is likely to be broken in the active form of this enzyme. Post-translationally, predicted to be exported by the Tat system. The position of the signal peptide cleavage has been experimentally proven.

The protein resides in the periplasm. The catalysed reaction is formate + NAD(+) = CO2 + NADH. Functionally, alpha chain of the formate dehydrogenase (FDH) catalyze the reversible two-electron oxidation of formate to carbon dioxide. FDH loses activity in the presence of air, but this activity can be restored. The alpha subunit of formate dehydrogenase forms the active site. This chain is Formate dehydrogenase subunit alpha, found in Megalodesulfovibrio gigas (Desulfovibrio gigas).